Reading from the N-terminus, the 129-residue chain is Small ribosomal subunit protein uS11 (129 aa).

It belongs to the universal ribosomal protein uS11 family. In terms of assembly, part of the 30S ribosomal subunit. Interacts with proteins S7 and S18. Binds to IF-3.

In terms of biological role, located on the platform of the 30S subunit, it bridges several disparate RNA helices of the 16S rRNA. Forms part of the Shine-Dalgarno cleft in the 70S ribosome. The sequence is that of Small ribosomal subunit protein uS11 from Bartonella bacilliformis (strain ATCC 35685 / KC583 / Herrer 020/F12,63).